Here is a 1331-residue protein sequence, read N- to C-terminus: Retrotransposon-like protein 1 (1331 aa).

Disordered regions lie at residues methionine 1 to aspartate 123, threonine 128 to valine 147, glutamate 556 to tyrosine 595, and proline 971 to asparagine 1033. Over residues serine 19–serine 30 the composition is skewed to low complexity. Composition is skewed to acidic residues over residues glutamate 109–aspartate 123, threonine 128–aspartate 143, and glycine 569–proline 578. Low complexity predominate over residues arginine 992–threonine 1001. Over residues proline 1015 to glutamate 1024 the composition is skewed to acidic residues. 2 consecutive transmembrane segments (helical) span residues phenylalanine 1070–leucine 1090 and leucine 1117–phenylalanine 1137. Positions serine 1309–aspartate 1331 are disordered. A compositionally biased stretch (acidic residues) spans leucine 1320–aspartate 1331.

It localises to the membrane. Functionally, plays an essential role in capillaries endothelial cells for the maintenance of feto-maternal interface and for development of the placenta. This is Retrotransposon-like protein 1 (RTL1) from Bos taurus (Bovine).